We begin with the raw amino-acid sequence, 496 residues long: RNA-binding motif protein, Y chromosome, family 1 member B (496 aa).

The RRM domain occupies glycine 8–lysine 85. 2 disordered regions span residues aspartate 67–tyrosine 349 and lysine 452–tyrosine 496. Composition is skewed to low complexity over residues proline 97–glycine 114 and proline 149–glycine 159. Residues asparagine 175–methionine 184 are compositionally biased toward polar residues. Basic and acidic residues-rich tracts occupy residues arginine 204–glycine 214, aspartate 242–serine 253, alanine 276–tyrosine 289, glycine 313–tyrosine 326, serine 335–tyrosine 349, and glycine 484–tyrosine 496.

In terms of assembly, interacts with splicing factor proteins SFRS3/SRP20, TRA2B/SFRS10, KHDRBS1/SAM68 and KHDRBS3. Testis-specific.

The protein localises to the nucleus. Its function is as follows. RNA-binding protein which may be involved in spermatogenesis. Required for sperm development, possibly by participating in pre-mRNA splicing in the testis. The chain is RNA-binding motif protein, Y chromosome, family 1 member B (RBMY1B) from Homo sapiens (Human).